Reading from the N-terminus, the 259-residue chain is uncharacterized protein (259 aa).

Residues 1-22 (MKHSKKLLLCISFLLITFFISG) form the signal peptide. Cys23 carries N-palmitoyl cysteine lipidation. The S-diacylglycerol cysteine moiety is linked to residue Cys23.

The protein belongs to the staphylococcal tandem lipoprotein family.

The protein resides in the cell membrane. This is an uncharacterized protein from Staphylococcus epidermidis (strain ATCC 35984 / DSM 28319 / BCRC 17069 / CCUG 31568 / BM 3577 / RP62A).